The sequence spans 322 residues: Tropinone reductase homolog At2g29260, chloroplastic (322 aa).

The N-terminal 61 residues, 1-61 (MVLDMASHLY…YASQSSIAIT (61 aa)), are a transit peptide targeting the chloroplast. 74–98 (LVTGGTRGIGRAIVEELAGLGAEVH) is an NADP(+) binding site. Ser-207 provides a ligand contact to substrate.

This sequence belongs to the short-chain dehydrogenases/reductases (SDR) family. SDR65C subfamily.

It is found in the plastid. It localises to the chloroplast. The chain is Tropinone reductase homolog At2g29260, chloroplastic from Arabidopsis thaliana (Mouse-ear cress).